The primary structure comprises 293 residues: 4-hydroxy-tetrahydrodipicolinate synthase (293 aa).

A pyruvate-binding site is contributed by T47. The active-site Proton donor/acceptor is the Y135. The Schiff-base intermediate with substrate role is filled by K164. I205 contacts pyruvate.

This sequence belongs to the DapA family. In terms of assembly, homotetramer; dimer of dimers.

It localises to the cytoplasm. It catalyses the reaction L-aspartate 4-semialdehyde + pyruvate = (2S,4S)-4-hydroxy-2,3,4,5-tetrahydrodipicolinate + H2O + H(+). Its pathway is amino-acid biosynthesis; L-lysine biosynthesis via DAP pathway; (S)-tetrahydrodipicolinate from L-aspartate: step 3/4. Its function is as follows. Catalyzes the condensation of (S)-aspartate-beta-semialdehyde [(S)-ASA] and pyruvate to 4-hydroxy-tetrahydrodipicolinate (HTPA). This is 4-hydroxy-tetrahydrodipicolinate synthase from Symbiobacterium thermophilum (strain DSM 24528 / JCM 14929 / IAM 14863 / T).